The following is a 275-amino-acid chain: NH(3)-dependent NAD(+) synthetase (275 aa).

An ATP-binding site is contributed by 46–53; sequence GISGGQDS. Asp52 contributes to the Mg(2+) binding site. Arg140 contributes to the deamido-NAD(+) binding site. Residue Thr160 participates in ATP binding. Glu165 contacts Mg(2+). Lys173 and Asp180 together coordinate deamido-NAD(+). Residues Lys189 and Thr211 each contribute to the ATP site. 260–261 contributes to the deamido-NAD(+) binding site; that stretch reads HK.

Belongs to the NAD synthetase family. Homodimer.

The enzyme catalyses deamido-NAD(+) + NH4(+) + ATP = AMP + diphosphate + NAD(+) + H(+). It participates in cofactor biosynthesis; NAD(+) biosynthesis; NAD(+) from deamido-NAD(+) (ammonia route): step 1/1. Catalyzes the ATP-dependent amidation of deamido-NAD to form NAD. Uses ammonia as a nitrogen source. This is NH(3)-dependent NAD(+) synthetase from Escherichia coli O7:K1 (strain IAI39 / ExPEC).